The sequence spans 110 residues: Phosphoribosyl-ATP pyrophosphatase (110 aa).

It belongs to the PRA-PH family.

Its subcellular location is the cytoplasm. The catalysed reaction is 1-(5-phospho-beta-D-ribosyl)-ATP + H2O = 1-(5-phospho-beta-D-ribosyl)-5'-AMP + diphosphate + H(+). It functions in the pathway amino-acid biosynthesis; L-histidine biosynthesis; L-histidine from 5-phospho-alpha-D-ribose 1-diphosphate: step 2/9. The chain is Phosphoribosyl-ATP pyrophosphatase from Pseudomonas fluorescens (strain ATCC BAA-477 / NRRL B-23932 / Pf-5).